Here is a 366-residue protein sequence, read N- to C-terminus: Endophilin-B1 (366 aa).

The segment at M1–L30 is membrane-binding amphipathic helix. Residues M1 to E37 are required for membrane binding. The region spanning E27 to S261 is the BAR domain. Coiled-coil stretches lie at residues E34–Q54 and K160–A185. Residues S306–N366 enclose the SH3 domain.

It belongs to the endophilin family. Homodimer, and heterodimer with SH3GLB2. Binds BAX. Binds DNM1, HTT, AMPH, BIN1 and ARFGAP1.

It is found in the cytoplasm. Its subcellular location is the golgi apparatus membrane. The protein localises to the mitochondrion outer membrane. Functionally, may be required for normal outer mitochondrial membrane dynamics. Required for coatomer-mediated retrograde transport in certain cells. May recruit other proteins to membranes with high curvature. May promote membrane fusion. The chain is Endophilin-B1 from Gallus gallus (Chicken).